The sequence spans 577 residues: Outer spore wall assembly protein SHE10 (577 aa).

A signal peptide spans 1–23 (MGKLIKLITTLTVLVSLLQYCCE). 2 coiled-coil regions span residues 379–416 (NETRSTLDELTNAMEKDLSEITDEIEKKVNAIREENVE) and 513–561 (ILRS…EEDV). Basic and acidic residues predominate over residues 525 to 545 (RERKERERKEREKAAAEEFQR). The disordered stretch occupies residues 525-577 (RERKERERKEREKAAAEEFQRQQELLRQQEEEDEEDVSYTSTSTITTTTTMTL). Over residues 562–577 (SYTSTSTITTTTTMTL) the composition is skewed to low complexity.

This sequence belongs to the SHE10 family. Component of the mitochondria-localized RNase mitochondrial RNA-processing (RNase MRP) composed of one single RNA encoded by the NME1 gene and at least 31 proteins. Absent in the nucleus-localized RNase MRP (NuMRP).

The protein resides in the mitochondrion. Involved in spore wall assembly. May be a component of the mitochondrial RNase MRP (MtMRP), a ribonucleoprotein endoribonuclease involved in the cleaving RNA transcripts to generate primers for DNA replication in mitochondria. This Saccharomyces cerevisiae (strain YJM789) (Baker's yeast) protein is Outer spore wall assembly protein SHE10.